The following is a 505-amino-acid chain: AMP phosphorylase (505 aa).

AMP is bound by residues glycine 170, 196–201 (SRAITS), and threonine 205. Aspartate 258 functions as the Proton donor in the catalytic mechanism. The AMP site is built by serine 266 and lysine 290.

It belongs to the thymidine/pyrimidine-nucleoside phosphorylase family. Type 2 subfamily.

The enzyme catalyses AMP + phosphate = alpha-D-ribose 1,5-bisphosphate + adenine. The catalysed reaction is CMP + phosphate = cytosine + alpha-D-ribose 1,5-bisphosphate. It carries out the reaction UMP + phosphate = alpha-D-ribose 1,5-bisphosphate + uracil. Its function is as follows. Catalyzes the conversion of AMP and phosphate to adenine and ribose 1,5-bisphosphate (R15P). Exhibits phosphorylase activity toward CMP and UMP in addition to AMP. Functions in an archaeal AMP degradation pathway, together with R15P isomerase and RubisCO. This Methanococcus maripaludis (strain C5 / ATCC BAA-1333) protein is AMP phosphorylase.